Reading from the N-terminus, the 425-residue chain is UPF0597 protein Moth_1414 (425 aa).

This sequence belongs to the UPF0597 family.

The polypeptide is UPF0597 protein Moth_1414 (Moorella thermoacetica (strain ATCC 39073 / JCM 9320)).